We begin with the raw amino-acid sequence, 434 residues long: Histidinol dehydrogenase (434 aa).

NAD(+)-binding residues include tyrosine 130, glutamine 188, and asparagine 211. Substrate contacts are provided by serine 237, glutamine 259, and histidine 262. Zn(2+) contacts are provided by glutamine 259 and histidine 262. Residues glutamate 326 and histidine 327 each act as proton acceptor in the active site. Histidine 327, aspartate 360, glutamate 414, and histidine 419 together coordinate substrate. Aspartate 360 serves as a coordination point for Zn(2+). Histidine 419 contacts Zn(2+).

It belongs to the histidinol dehydrogenase family. Homodimer. Zn(2+) serves as cofactor.

The enzyme catalyses L-histidinol + 2 NAD(+) + H2O = L-histidine + 2 NADH + 3 H(+). The protein operates within amino-acid biosynthesis; L-histidine biosynthesis; L-histidine from 5-phospho-alpha-D-ribose 1-diphosphate: step 9/9. In terms of biological role, catalyzes the sequential NAD-dependent oxidations of L-histidinol to L-histidinaldehyde and then to L-histidine. In Escherichia coli O157:H7, this protein is Histidinol dehydrogenase.